Consider the following 349-residue polypeptide: Dehydrogenase FPY6 (349 aa).

Belongs to the Gfo/Idh/MocA family.

Its pathway is secondary metabolite biosynthesis. Functionally, dehydrogenase; part of the gene cluster that mediates the biosynthesis of the gamma-pyrones fusapyrone (FPY) and deoxyfusapyrone (dFPY). FPY is an undecaketide and thus likely synthesized by the polyketide synthase FPY1 from acetyl-CoA functioning as starter unit and the addition of 10 malonyl-CoA extender units by successive Claisen-condensations. Next to this, FPY shares some rare features: C-glycosylated 4-deoxyglucose at C-3, a gem-dimethyl group at C-13, and an alpha-beta to beta-gamma double bond shift at C-20. During FPY biosynthesis mono-C-methyl groups are transferred to the tetra-, penta-, hexa- and heptaketide, while two C-methyl groups are transferred to the nonaketide, suggesting that the CMet domain is programmed to selectively catalyze two successive C-alpha-methylation reactions of the nonaketide, while other alpha-carbons are non- or mono-methylated only. While the origin of the 4'-deoxyglucose moiety remains opaque, its transfer to C-3 is most likely mediated by the C-glycosyltransferase FPY2. Next to this, the hydroxyl group present at C-33 and discriminating between FPY and dFPY, is likely to be installed by the cytochrome P450 monooxygenase FPY7. No putative function can be predicted for the remaining genes FPY3-FPY6. This chain is Dehydrogenase FPY6, found in Fusarium mangiferae (Mango malformation disease fungus).